Reading from the N-terminus, the 594-residue chain is NADH-ubiquinone oxidoreductase chain 5 (594 aa).

15 helical membrane passes run M1–M21, A43–I63, I87–Y107, I114–A134, L137–W157, A171–S191, L211–L233, T241–I261, L272–A292, I301–N320, A325–I347, M366–L386, L409–F429, L457–T477, and L486–L506.

Belongs to the complex I subunit 5 family. As to quaternary structure, core subunit of respiratory chain NADH dehydrogenase (Complex I) which is composed of 45 different subunits.

It is found in the mitochondrion inner membrane. The catalysed reaction is a ubiquinone + NADH + 5 H(+)(in) = a ubiquinol + NAD(+) + 4 H(+)(out). Its function is as follows. Core subunit of the mitochondrial membrane respiratory chain NADH dehydrogenase (Complex I) which catalyzes electron transfer from NADH through the respiratory chain, using ubiquinone as an electron acceptor. Essential for the catalytic activity and assembly of complex I. The protein is NADH-ubiquinone oxidoreductase chain 5 (MT-ND5) of Hippopotamus amphibius (Hippopotamus).